Here is a 299-residue protein sequence, read N- to C-terminus: 4-sulfomuconolactone hydrolase (299 aa).

This sequence belongs to the metallo-dependent hydrolases superfamily. Sulfomuconolactone hydrolase family. In terms of assembly, monomer. The cofactor is Zn(2+).

It carries out the reaction 4-sulfomuconolactone + H2O = maleylacetate + sulfite + 2 H(+). Functionally, involved in the degradation of 4-sulfocatechol which is a central intermediate in the degradation of substituted sulfonated benzenes. Catalyzes the hydrolytical desulfonation of 4-sulfomuconolactone to yield maleylacetate. The polypeptide is 4-sulfomuconolactone hydrolase (Rhizobium radiobacter (Agrobacterium tumefaciens)).